Reading from the N-terminus, the 461-residue chain is Cyclic AMP-responsive element-binding protein 3-like protein 3 (461 aa).

Over 1 to 322 the chain is Cytoplasmic; the sequence is MNTDLAAGKM…STSKSAQTGT (322 aa). Residues 51 to 120 form a disordered region; sequence DQQVLPNPDS…AGCHPAQPGK (70 aa). Over residues 63-85 the composition is skewed to low complexity; that stretch reads FLSSILGSGDSLPSSPLWSPEGS. Serine 173 carries the post-translational modification Phosphoserine. One can recognise a bZIP domain in the interval 243–306; it reads VLKKIRRKIR…LSLLEQLKKL (64 aa). Positions 245–274 are basic motif; the sequence is KKIRRKIRNKQSAQESRKKKKEYIDGLETR. The tract at residues 285–306 is leucine-zipper; it reads LQRKVLHLEKQNLSLLEQLKKL. A Glycyl lysine isopeptide (Lys-Gly) (interchain with G-Cter in ubiquitin) cross-link involves residue lysine 294. A helical; Signal-anchor for type II membrane protein transmembrane segment spans residues 323 to 343; the sequence is CVAVLLLSFALIILPSISPFG. The Lumenal portion of the chain corresponds to 344–461; sequence PNKTESPGDF…AGLEAAGDEL (118 aa). The tract at residues 370 to 408 is disordered; it reads RVAADAVPGSEAPGPRPEADTTREESPGSPGADWGFQDT. Serine 379 carries O-linked (GalNAc...) serine glycosylation. Over residues 386-395 the composition is skewed to basic and acidic residues; sequence PEADTTREES. Asparagine 410, asparagine 413, asparagine 420, and asparagine 427 each carry an N-linked (GlcNAc...) asparagine glycan. A disordered region spans residues 442-461; the sequence is APGPSTGSGRAGLEAAGDEL.

It belongs to the bZIP family. ATF subfamily. As to quaternary structure, binds DNA as a dimer. May form homodimers. Interacts with ATF6. Interacts with SYNV1/HRD1; this interaction leads to CREB3L3 ubiquitination and proteasomal degradation. In terms of processing, controlled by regulated intramembrane proteolysis (RIP). Following ER stress a fragment containing the cytoplasmic transcription factor domain is released by proteolysis. The cleavage seems to be performed sequentially by site-1 and site-2 proteases (PS1 and PS2). N- and O-glycosylated. N-glycosylation is required for optimal proteolytic activation. O-glycosylated with core 1 or possibly core 8 glycans. Post-translationally, ubiquitinated at Lys-294 by SYNV1/HRD1 via 'Lys-27'-linked ubiquitin. In terms of tissue distribution, exclusively expressed in liver. Underexpressed in hepatocellular carcinoma tissues.

The protein resides in the endoplasmic reticulum membrane. It is found in the nucleus. Transcription factor that may act during endoplasmic reticulum stress by activating unfolded protein response target genes. Activated in response to cAMP stimulation. In vitro, binds to the cAMP response element (CRE) and box-B element. Activates transcription through box-B element. Activates transcription through CRE. May function synergistically with ATF6. In acute inflammatory response, may activate expression of acute phase response (APR) genes. May be involved in growth suppression. Regulates FGF21 transcription. Plays a crucial role in the regulation of triglyceride metabolism and is required for the maintenance of normal plasma triglyceride concentrations. In Homo sapiens (Human), this protein is Cyclic AMP-responsive element-binding protein 3-like protein 3 (CREB3L3).